The sequence spans 590 residues: Nuclear receptor subfamily 2 group C member 1 (590 aa).

The required for interaction with KAT2B stretch occupies residues 1 to 166 (MATIEEIAHQ…RLQRCIAFGM (166 aa)). The nuclear receptor DNA-binding region spans 98-173 (FDLCVVCGDK…FGMKQDSVQC (76 aa)). NR C4-type zinc fingers lie at residues 101 to 121 (CVVCGDKASGRHYGAITCEGC) and 137 to 156 (CRGSKDCVINKHHRNRCQYC). Phosphoserine occurs at positions 185 and 203. Threonine 208 is subject to Phosphothreonine. The residue at position 210 (threonine 210) is a Phosphothreonine; by MAPK1. Lysine 238 is covalently cross-linked (Glycyl lysine isopeptide (Lys-Gly) (interchain with G-Cter in SUMO); alternate). Residue lysine 238 forms a Glycyl lysine isopeptide (Lys-Gly) (interchain with G-Cter in SUMO2); alternate linkage. One can recognise an NR LBD domain in the interval 333–577 (EGMEGSPHLI…SVIPHILKME (245 aa)). Phosphoserine; by PKC is present on residues serine 461 and serine 568. A required for interaction with NRIP1 region spans residues 571–590 (PHILKMEPADYNSQIIGHSL). Residue lysine 575 forms a Glycyl lysine isopeptide (Lys-Gly) (interchain with G-Cter in SUMO2) linkage.

Belongs to the nuclear hormone receptor family. NR2 subfamily. As to quaternary structure, homodimer. Heterodimer; with NR2C2 which is required for chromatin remodeling and for binding to promoter regions such as globin DR1 repeats. Interacts with ESR1; the interaction prevents homodimerization of ESR1 and suppresses its transcriptional activity and cell growth. Interacts with NRIP1 (via its LXXLL motifs); the interaction provides corepressor activity. Interacts with HDAC3 (via the DNA-binding domain); the interaction recruits phosphorylated NR2C1 to PML bodies for sumoylation. Interacts with HDAC4 (via the DNA-binding domain). Interacts with PIAS1; the interaction is required for sumoylation of NR2C1. Interacts with UBE2I; the interaction is required for sumoylation of NR2C1. Interacts with KAT2B; the interaction acts as a corepressor of gene expression. Sumoylation requires both PIAS1 and UBE2I. Sumoylation appears to dissociate NR2C1 from the PML nuclear bodies. Enhances the interaction with NRIP1 but inhibits interaction with KAT2B. In proliferating cells, stimulation by all-trans retinoic acid, activation of MAPK1-mediated phosphorylation and recruitment to PML bodies with subsequent sumoylation, suppresses OCT4 expression. Post-translationally, phosphorylated on several serine and threonine residues. Phosphorylation on Thr-210, stimulated by all-trans retinoic acid (atRA) mediates PML location and sumoylation in proliferating cells which then modulates its association with effector molecules, KAT2B and NRIP1. Phosphorylation on Ser-568 by PKC is important for protein stability and function as activator of RARB. Isoform 1 is highly expressed in the adlumenal compartment of the seminiferous tubule of adult testes (at protein level) and in the eyes of newborn animals. Weakly expressed in other adult organs including the seminal vesicle, prostate, ovary, adrenal gland, heart, thymus, placenta and brain. Expressed during embryonic stages in developing eyes, brain and cartilage primordia (at protein level). Also expressed in the developing spinal motor neurons and in the sympathetic-, parasympathetic- and sensory ganglia of the embryonic PNS. Expressed in the developing neural epithelia of the inner ear, nasal cavity, tongue and retina. At day 16.5, expressed in various tissues including kidney and intestine. In contrast, isoform 2 is widely expressed at a low level throughout the adult testis.

The protein localises to the nucleus. The protein resides in the PML body. In terms of biological role, orphan nuclear receptor. Binds the IR7 element in the promoter of its own gene in an autoregulatory negative feedback mechanism. Primarily repressor of a broad range of genes including ESR1 and RARB. Together with NR2C2, forms the core of the DRED (direct repeat erythroid-definitive) complex that represses embryonic and fetal globin transcription. Binds to hormone response elements (HREs) consisting of two 5'-AGGTCA-3' half site direct repeat consensus sequences. Also activator of OCT4 gene expression. Plays a fundamental role in early embryogenesis and regulates embryonic stem cell proliferation and differentiation. Mediator of retinoic acid-regulated preadipocyte proliferation. This Mus musculus (Mouse) protein is Nuclear receptor subfamily 2 group C member 1.